The sequence spans 2188 residues: Genome polyprotein (2188 aa).

The Cell attachment site signature appears at 772–774 (RGD). Residues 795 to 889 (LAYLDRGFYK…DIFGTHTLSQ (95 aa)) enclose the LRAT domain. The active-site For protein 2A H-NC is the His805. The For protein 2A H-NC; Acyl-thioester intermediate role is filled by Cys874. An SF3 helicase domain is found at 1165–1326 (FQELARIPNR…KAYSKSGKLN (162 aa)). 1193-1200 (GEPGQGKS) serves as a coordination point for ATP. Tyr1502 bears the O-(5'-phospho-RNA)-tyrosine mark. The 191-residue stretch at 1526-1716 (APYDGQLEHI…IPFNFLKNDM (191 aa)) folds into the Peptidase C3 domain. Catalysis depends on for protease 3C activity residues His1566, Asp1604, and Cys1678. Cys1905 serves as the catalytic Acyl-thioester intermediate. Positions 1953–2067 (DYNYEMDYSQ…SLDREIEPER (115 aa)) constitute a RdRp catalytic domain. Asp1959 and Asp2053 together coordinate Mg(2+).

Belongs to the picornaviruses polyprotein family. Interacts with capsid protein VP1 and capsid protein VP3 to form heterotrimeric protomers. Five protomers subsequently associate to form pentamers which serve as building blocks for the capsid. In terms of assembly, interacts with capsid protein VP0, and capsid protein VP3 to form heterotrimeric protomers. Five protomers subsequently associate to form pentamers which serve as building blocks for the capsid. As to quaternary structure, interacts with capsid protein VP0 and capsid protein VP1 to form heterotrimeric protomers. Five protomers subsequently associate to form pentamers which serve as building blocks for the capsid. Homohexamer; forms a hexameric ring structure with 6-fold symmetry characteristic of AAA+ ATPases. In terms of assembly, homodimer. Interacts with host ACBD3. As to quaternary structure, interacts with RNA-directed RNA polymerase. Interacts with Viral protein genome-linked. The cofactor is Mg(2+). In terms of processing, VPg is uridylylated by the polymerase and is covalently linked to the 5'-end of genomic RNA. This uridylylated form acts as a nucleotide-peptide primer for the polymerase. Specific enzymatic cleavages yield mature proteins. All cleavages are catalyzed by P3C.

It localises to the virion. The protein localises to the host cytoplasm. The protein resides in the host nucleus. Its subcellular location is the host nucleolus. It is found in the host cytoplasmic vesicle membrane. The enzyme catalyses RNA(n) + a ribonucleoside 5'-triphosphate = RNA(n+1) + diphosphate. It carries out the reaction a ribonucleoside 5'-triphosphate + H2O = a ribonucleoside 5'-diphosphate + phosphate + H(+). It catalyses the reaction Selective cleavage of Gln-|-Gly bond in the poliovirus polyprotein. In other picornavirus reactions Glu may be substituted for Gln, and Ser or Thr for Gly.. Functionally, forms an icosahedral capsid of pseudo T=3 symmetry together with capsid proteins VP1 and VP3. The capsid is 300 Angstroms in diameter, composed of 60 copies of each capsid protein and enclosing the viral positive strand RNA genome. Capsid proteins interact with host alpha-V/beta-3 integrin heterodimer to provide virion attachment target cell. This attachment induces virion internalization predominantly through clathrin-mediated endocytosis. Binds packaging signals present in the viral RNA. In terms of biological role, forms an icosahedral capsid of pseudo T=3 symmetry together with capsid proteins VP0 and VP1. The capsid is 300 Angstroms in diameter, composed of 60 copies of each capsid protein and enclosing the viral positive strand RNA genome. Capsid proteins interact with host alpha-V/beta-3 integrin heterodimer to provide virion attachment target cell. This attachment induces virion internalization predominantly through clathrin-mediated endocytosis. Binds packaging signals present in the viral RNA. Forms an icosahedral capsid of pseudo T=3 symmetry together with capsid proteins VP0 and VP3. The capsid is 300 Angstroms in diameter, composed of 60 copies of each capsid protein and enclosing the viral positive strand RNA genome. Capsid proteins interact with host alpha-V/beta-3 integrin heterodimer to provide virion attachment target cell. This attachment induces virion internalization predominantly through clathrin-mediated endocytosis. Binds packaging signals present in the viral RNA. Its function is as follows. Is not a protease. Functionally, plays an essential role in the virus replication cycle by acting as a viroporin. Creates a pore in the host endoplasmic reticulum and as a consequence releases Ca2+ in the cytoplasm of infected cell. In turn, high levels of cytoplasmic calcium may trigger membrane trafficking and transport of viral ER-associated proteins to viroplasms, sites of viral genome replication. In terms of biological role, induces and associates with structural rearrangements of intracellular membranes. Displays RNA-binding, nucleotide binding and NTPase activities. May play a role in virion morphogenesis and viral RNA encapsidation by interacting with the capsid protein VP3. Localizes the viral replication complex to the surface of membranous vesicles. It inhibits host cell endoplasmic reticulum-to-Golgi apparatus transport and causes the disassembly of the Golgi complex, possibly through GBF1 interaction. This would result in depletion of MHC, trail receptors and IFN receptors at the host cell surface. Plays an essential role in viral RNA replication by recruiting ACBD3 and PI4KB at the viral replication sites, thereby allowing the formation of the rearranged membranous structures where viral replication takes place. Its function is as follows. Acts as a primer for viral RNA replication and remains covalently bound to viral genomic RNA. VPg is uridylylated prior to priming replication into VPg-pUpU. The VPg-pUpU is then used as primer on the genomic RNA poly(A) by the RNA-dependent RNA polymerase to replicate the viral genome. Following genome release from the infecting virion in the cytoplasm, the VPg-RNA linkage is probably removed by host TDP2. During the late stage of the replication cycle, host TDP2 is excluded from sites of viral RNA synthesis and encapsidation, allowing for the generation of progeny virions. Functionally, cysteine protease that generates mature viral proteins from the precursor polyprotein. In addition to its proteolytic activity, it binds to viral RNA, and thus influences viral genome replication. RNA and substrate bind cooperatively to the protease. In terms of biological role, replicates the viral genomic RNA on the surface of intracellular membranes. Covalently attaches UMP to a tyrosine of VPg, which is used to prime RNA synthesis. The positive stranded RNA genome is first replicated at virus induced membranous vesicles, creating a dsRNA genomic replication form. This dsRNA is then used as template to synthesize positive stranded RNA genomes. ss(+)RNA genomes are either translated, replicated or encapsidated. This Human parechovirus 5 (strain CT86-6760) (HPeV-5) protein is Genome polyprotein.